The primary structure comprises 113 residues: Ferredoxin-1 (113 aa).

4Fe-4S ferredoxin-type domains lie at 2 to 30 and 31 to 60; these read TYIV…YEGE and NFLV…PDTE. Cys-9 and Cys-17 together coordinate [3Fe-4S] cluster. [4Fe-4S] cluster is bound by residues Cys-21, Cys-40, Cys-43, and Cys-46. A [3Fe-4S] cluster-binding site is contributed by Cys-50.

[4Fe-4S] cluster serves as cofactor. It depends on [3Fe-4S] cluster as a cofactor.

This is Ferredoxin-1 (fdxA) from Caulobacter vibrioides (strain ATCC 19089 / CIP 103742 / CB 15) (Caulobacter crescentus).